Reading from the N-terminus, the 470-residue chain is UDP-N-acetylmuramoylalanine--D-glutamate ligase (470 aa).

121 to 127 (GTNGKST) contacts ATP.

The protein belongs to the MurCDEF family.

The protein localises to the cytoplasm. It catalyses the reaction UDP-N-acetyl-alpha-D-muramoyl-L-alanine + D-glutamate + ATP = UDP-N-acetyl-alpha-D-muramoyl-L-alanyl-D-glutamate + ADP + phosphate + H(+). The protein operates within cell wall biogenesis; peptidoglycan biosynthesis. Cell wall formation. Catalyzes the addition of glutamate to the nucleotide precursor UDP-N-acetylmuramoyl-L-alanine (UMA). The polypeptide is UDP-N-acetylmuramoylalanine--D-glutamate ligase (Rhizobium etli (strain ATCC 51251 / DSM 11541 / JCM 21823 / NBRC 15573 / CFN 42)).